A 532-amino-acid polypeptide reads, in one-letter code: UDP-N-acetylmuramyl-tripeptide synthetase (532 aa).

Position 34 (serine 34) interacts with UDP-N-acetyl-alpha-D-muramoyl-L-alanyl-D-glutamate. 127 to 133 lines the ATP pocket; the sequence is GTEGKSS. UDP-N-acetyl-alpha-D-muramoyl-L-alanyl-D-glutamate is bound by residues 171-172, serine 198, and arginine 208; that span reads TT. Lysine 240 carries the post-translational modification N6-carboxylysine.

This sequence belongs to the MurCDEF family. MurE subfamily. Carboxylation is probably crucial for Mg(2+) binding and, consequently, for the gamma-phosphate positioning of ATP.

The protein localises to the cytoplasm. The protein operates within cell wall biogenesis; peptidoglycan biosynthesis. Functionally, catalyzes the addition of an amino acid to the nucleotide precursor UDP-N-acetylmuramoyl-L-alanyl-D-glutamate (UMAG) in the biosynthesis of bacterial cell-wall peptidoglycan. In Treponema denticola (strain ATCC 35405 / DSM 14222 / CIP 103919 / JCM 8153 / KCTC 15104), this protein is UDP-N-acetylmuramyl-tripeptide synthetase.